A 160-amino-acid polypeptide reads, in one-letter code: SsrA-binding protein (160 aa).

Basic and acidic residues predominate over residues 138–148 (KRDDIKDREWQ). The disordered stretch occupies residues 138–160 (KRDDIKDREWQTAKSRIMKHANR).

Belongs to the SmpB family.

Its subcellular location is the cytoplasm. Functionally, required for rescue of stalled ribosomes mediated by trans-translation. Binds to transfer-messenger RNA (tmRNA), required for stable association of tmRNA with ribosomes. tmRNA and SmpB together mimic tRNA shape, replacing the anticodon stem-loop with SmpB. tmRNA is encoded by the ssrA gene; the 2 termini fold to resemble tRNA(Ala) and it encodes a 'tag peptide', a short internal open reading frame. During trans-translation Ala-aminoacylated tmRNA acts like a tRNA, entering the A-site of stalled ribosomes, displacing the stalled mRNA. The ribosome then switches to translate the ORF on the tmRNA; the nascent peptide is terminated with the 'tag peptide' encoded by the tmRNA and targeted for degradation. The ribosome is freed to recommence translation, which seems to be the essential function of trans-translation. This chain is SsrA-binding protein, found in Serratia proteamaculans (strain 568).